The following is a 375-amino-acid chain: DNA replication and repair protein RecF (375 aa).

An ATP-binding site is contributed by 30-37 (GENAQGKT).

It belongs to the RecF family.

Its subcellular location is the cytoplasm. Its function is as follows. The RecF protein is involved in DNA metabolism; it is required for DNA replication and normal SOS inducibility. RecF binds preferentially to single-stranded, linear DNA. It also seems to bind ATP. This chain is DNA replication and repair protein RecF, found in Bacillus anthracis (strain A0248).